Consider the following 1813-residue polypeptide: U3 small nucleolar RNA-associated protein 10 (1813 aa).

HEAT repeat units lie at residues 245–283 (DVLIRILPVLNDAFMLRKAPQLVVGCYMLCVVLANKASL), 389–427 (SETIEALTILLQAFSDLQRQGLVADGMGKQLSDLLLQFN), 428–464 (ESDTLAPLLRKAIENAGVDITQLEMTLETVLQADIMP), 584–621 (ADMQGILPYIISALADPSERVRREAAALLSLIDRLASK), and 659–695 (IIHHALMPALEEYVLDPDQVGRTLTQVIRGPRSQDDS). Disordered regions lie at residues 686-705 (IRGPRSQDDSDRTRSESTGV) and 887-912 (DLGSRGPPSKKRRTSQNNMVPMSSMD). A compositionally biased stretch (basic and acidic residues) spans 690–705 (RSQDDSDRTRSESTGV). 7 HEAT repeats span residues 1058 to 1095 (QTIDQVVPPLVQSLRNQKRDVVSGTSELLLSFTTAFEH), 1189 to 1228 (KIAVDLLQALSHLLKFTSLRTKMSECFDSGTEQQVDKAHG), 1265 to 1302 (LSLVDFVDTIEVLLQRPSDDLRRKVIKLLENRLDSSND), 1309 to 1347 (ARVLSFLTVLINILETSPDILLKHAAVACIEKIGEKYGK), 1398 to 1437 (EALPRAIDLLRDTLAASDDDSQLHDAVYSLISALLIHVPW), 1678 to 1715 (LASISEPLIKQLSMATNSPTLDLVAAEAIPTIVELAVA), and 1769 to 1806 (ALLPEMLPYISELLEDDDENVEREVRRWVLSIEDILGE).

It belongs to the HEATR1/UTP10 family. Component of the ribosomal small subunit (SSU) processome.

It localises to the nucleus. Its subcellular location is the nucleolus. Functionally, involved in nucleolar processing of pre-18S ribosomal RNA. Involved in ribosome biosynthesis. In Coccidioides immitis (strain RS) (Valley fever fungus), this protein is U3 small nucleolar RNA-associated protein 10.